A 211-amino-acid chain; its full sequence is Large ribosomal subunit protein bL25 (211 aa).

The tract at residues 186–211 (GRALQSMDAAESAVEQPGEQPATAAG) is disordered.

It belongs to the bacterial ribosomal protein bL25 family. CTC subfamily. Part of the 50S ribosomal subunit; part of the 5S rRNA/L5/L18/L25 subcomplex. Contacts the 5S rRNA. Binds to the 5S rRNA independently of L5 and L18.

Its function is as follows. This is one of the proteins that binds to the 5S RNA in the ribosome where it forms part of the central protuberance. The polypeptide is Large ribosomal subunit protein bL25 (Gloeobacter violaceus (strain ATCC 29082 / PCC 7421)).